The primary structure comprises 170 residues: Large ribosomal subunit protein uL11 (170 aa).

This sequence belongs to the universal ribosomal protein uL11 family. In terms of assembly, part of the ribosomal stalk of the 50S ribosomal subunit. Interacts with L10 and the large rRNA to form the base of the stalk. L10 forms an elongated spine to which L12 dimers bind in a sequential fashion forming a multimeric L10(L12)X complex.

In terms of biological role, forms part of the ribosomal stalk which helps the ribosome interact with GTP-bound translation factors. The polypeptide is Large ribosomal subunit protein uL11 (Saccharolobus islandicus (strain Y.N.15.51 / Yellowstone #2) (Sulfolobus islandicus)).